Consider the following 103-residue polypeptide: MSGRGKGGKGLGKGGAKRHRKVLRDNIQGITKPAIRRLARRGGVKRISGLIYEETRGVLKIFLENVIRDSVTYTEHARRKTVTAMDVVYALKRQGRTLYGFGG.

The segment covering 1–14 (MSGRGKGGKGLGKG) has biased composition (gly residues). A disordered region spans residues 1-20 (MSGRGKGGKGLGKGGAKRHR). At Ser2 the chain carries N-acetylserine. Lys17 bears the N6-acetyllysine mark. The DNA-binding element occupies 17 to 21 (KRHRK). Residue Lys21 is modified to N6-methyllysine.

Belongs to the histone H4 family. In terms of assembly, the nucleosome is a histone octamer containing two molecules each of H2A, H2B, H3 and H4 assembled in one H3-H4 heterotetramer and two H2A-H2B heterodimers. The octamer wraps approximately 147 bp of DNA.

The protein localises to the nucleus. Its subcellular location is the chromosome. Its function is as follows. Core component of nucleosome. Nucleosomes wrap and compact DNA into chromatin, limiting DNA accessibility to the cellular machineries which require DNA as a template. Histones thereby play a central role in transcription regulation, DNA repair, DNA replication and chromosomal stability. DNA accessibility is regulated via a complex set of post-translational modifications of histones, also called histone code, and nucleosome remodeling. The chain is Histone H4 from Capsicum annuum (Capsicum pepper).